A 267-amino-acid chain; its full sequence is Zerumbone synthase (267 aa).

9–33 contacts NAD(+); it reads LVTGGASGIGESIARLFIEHGAKIC. Ser142 contributes to the substrate binding site. Catalysis depends on Tyr155, which acts as the Proton acceptor.

The protein belongs to the short-chain dehydrogenases/reductases (SDR) family. As to expression, expressed in leaves, stems and rhizomes.

It carries out the reaction 10-hydroxy-alpha-humulene + NAD(+) = zerumbone + NADH + H(+). Its function is as follows. Catalyzes 8-hydroxy-alpha-humulene into zerumbone in presence of NAD. Also converts borneol to camphor in vitro. Zerumbone is a highly promising multi-anticancer agent. The protein is Zerumbone synthase (ZSD1) of Zingiber zerumbet (Shampoo ginger).